The primary structure comprises 469 residues: Probable glycine dehydrogenase (decarboxylating) subunit 1 (469 aa).

This sequence belongs to the GcvP family. N-terminal subunit subfamily. As to quaternary structure, the glycine cleavage system is composed of four proteins: P, T, L and H. In this organism, the P 'protein' is a heterodimer of two subunits.

The catalysed reaction is N(6)-[(R)-lipoyl]-L-lysyl-[glycine-cleavage complex H protein] + glycine + H(+) = N(6)-[(R)-S(8)-aminomethyldihydrolipoyl]-L-lysyl-[glycine-cleavage complex H protein] + CO2. In terms of biological role, the glycine cleavage system catalyzes the degradation of glycine. The P protein binds the alpha-amino group of glycine through its pyridoxal phosphate cofactor; CO(2) is released and the remaining methylamine moiety is then transferred to the lipoamide cofactor of the H protein. The protein is Probable glycine dehydrogenase (decarboxylating) subunit 1 of Staphylothermus marinus (strain ATCC 43588 / DSM 3639 / JCM 9404 / F1).